The primary structure comprises 930 residues: Nonribosomal peptide synthetase btyA (930 aa).

Residues 31–440 (ESPHRLTYAE…RGRSKELICI (410 aa)) form an adenylation (A) domain region. In terms of domain architecture, Carrier spans 570–647 (PAGNETETLL…VLARQLQDGH (78 aa)). O-(pantetheine 4'-phosphoryl)serine is present on S607. The segment at 667-920 (PLWLIHPIGG…EDNVHKVYRV (254 aa)) is thioesterase (TE) domain.

It belongs to the NRP synthetase family.

The enzyme catalyses 2 3-(4-hydroxyphenyl)pyruvate + H(+) = (2S)-2-(4-hydoxybenzyl)-3-(4-hydroxyphenyl)-2-furonol carboxylate + H2O. It functions in the pathway secondary metabolite biosynthesis. Nonribosomal peptide synthetase; part of the gene cluster that mediates the biosynthesis of butyrolactones, natural products that show a wide range of biological activities such as antitumor, antiparasitic or anti-inflammatory activity. The nonribosomal peptide synthetase btyA is responsible for the production of butyrolactone II, the core structure of butyrolactones. BtyA first activates 4-hydroxyphenylpyruvate (HPPA) through its A domain to AMP-HPPA. The HPPA unit is then loaded to the T domain and eventually transferred to the TE domain. Upon loading of another HPPA unit to the T domain, the TE domain promotes the enolate formation on the unit attached. Then aldol condensation establishes the carbon-carbon bond between the two units, followed by ester cyclization, and keto-enol tautomerization to yield the gamma-butyrolactone core. Hydrolysis, and finally esterification of the exposed carboxylic acid group yields butyrolactone II. Two additional enzymes, a prenyltransferase and an epoxidase, may be involved in the tailoring modifications of butyrolactone II to give butyrolactone III and butyrolactone I. This Aspergillus terreus (strain NIH 2624 / FGSC A1156) protein is Nonribosomal peptide synthetase btyA.